Reading from the N-terminus, the 201-residue chain is Regulator of G-protein signaling rgs-1 (201 aa).

Positions 37-156 (SWQQSFDTLM…FLTSIFYRET (120 aa)) constitute an RGS domain. The segment at 168–201 (GGDEEKEREQRAERARLNVPATAAEGSSKDISMV) is disordered. A compositionally biased stretch (basic and acidic residues) spans 170 to 183 (DEEKEREQRAERAR).

In terms of tissue distribution, expressed in most or all neurons.

Functionally, inhibits G protein signaling in nervous system, interacting preferentially with the G(O) subfamily member goa-1. In vitro, protein acts as a GTPase activator of goa-1. Rgs-1 and rgs-2 redundantly adjust signaling when worms are fed to allow rapid induction of egg-laying behavior. The chain is Regulator of G-protein signaling rgs-1 (rgs-1) from Caenorhabditis elegans.